We begin with the raw amino-acid sequence, 100 residues long: Urease subunit gamma (100 aa).

It belongs to the urease gamma subunit family. Heterotrimer of UreA (gamma), UreB (beta) and UreC (alpha) subunits. Three heterotrimers associate to form the active enzyme.

It is found in the cytoplasm. The catalysed reaction is urea + 2 H2O + H(+) = hydrogencarbonate + 2 NH4(+). It participates in nitrogen metabolism; urea degradation; CO(2) and NH(3) from urea (urease route): step 1/1. The polypeptide is Urease subunit gamma (Rhizobium etli (strain CIAT 652)).